The sequence spans 155 residues: Microsomal glutathione S-transferase 1 (155 aa).

At 3–9 the chain is on the lumenal side; it reads DLRQLMD. Residues 10-33 traverse the membrane as a helical segment; sequence NEVLMAFTSYATIILTKMMFMSSA. Topologically, residues 34-62 are cytoplasmic; sequence TAFQRITNKVFANPEDCAGFGKGENAKKF. Arg-38 serves as a coordination point for glutathione. N6-acetyllysine is present on residues Lys-42, Lys-55, and Lys-60. Residues 63 to 96 traverse the membrane as a helical segment; it reads VRTDEKVERVRRAHLNDLENIVPFLGIGLLYSLS. The glutathione site is built by Arg-73, Arg-74, His-76, and Glu-81. The Lumenal portion of the chain corresponds to 97-99; the sequence is GPD. A helical transmembrane segment spans residues 100–123; the sequence is LSTALMHFRIFVGARIYHTIAYLT. Glutathione is bound at residue Tyr-121. Residues 124–128 lie on the Cytoplasmic side of the membrane; that stretch reads PLPQP. A helical membrane pass occupies residues 129-148; the sequence is NRGLAFFVGYGVTLSMAYRL. Over 149–155 the chain is Lumenal; that stretch reads LRSRLYL.

This sequence belongs to the MAPEG family. Homotrimer; The trimer binds only one molecule of glutathione. Acetylation of Lys-42 and Lys-55 is observed in liver mitochondria from fasted mice but not from fed mice. As to expression, expressed in the testes (at protein level).

It is found in the endoplasmic reticulum membrane. It localises to the mitochondrion outer membrane. It carries out the reaction RX + glutathione = an S-substituted glutathione + a halide anion + H(+). Its function is as follows. Conjugation of reduced glutathione to a wide number of exogenous and endogenous hydrophobic electrophiles. This is Microsomal glutathione S-transferase 1 (Mgst1) from Mus musculus (Mouse).